The primary structure comprises 95 residues: Small ribosomal subunit protein uS19 (95 aa).

The protein belongs to the universal ribosomal protein uS19 family.

Protein S19 forms a complex with S13 that binds strongly to the 16S ribosomal RNA. The sequence is that of Small ribosomal subunit protein uS19 from Thermodesulfovibrio yellowstonii (strain ATCC 51303 / DSM 11347 / YP87).